A 411-amino-acid polypeptide reads, in one-letter code: LL-diaminopimelate aminotransferase (411 aa).

2 residues coordinate substrate: tyrosine 15 and glycine 42. Pyridoxal 5'-phosphate is bound by residues tyrosine 72, 108–109, tyrosine 132, asparagine 187, tyrosine 218, and 246–248; these read AK and SFS. Residues lysine 109, tyrosine 132, and asparagine 187 each contribute to the substrate site. Residue lysine 249 is modified to N6-(pyridoxal phosphate)lysine. Positions 257 and 292 each coordinate pyridoxal 5'-phosphate. Residues asparagine 292 and arginine 388 each coordinate substrate.

Belongs to the class-I pyridoxal-phosphate-dependent aminotransferase family. LL-diaminopimelate aminotransferase subfamily. Homodimer. Pyridoxal 5'-phosphate serves as cofactor.

The enzyme catalyses (2S,6S)-2,6-diaminopimelate + 2-oxoglutarate = (S)-2,3,4,5-tetrahydrodipicolinate + L-glutamate + H2O + H(+). It functions in the pathway amino-acid biosynthesis; L-lysine biosynthesis via DAP pathway; LL-2,6-diaminopimelate from (S)-tetrahydrodipicolinate (aminotransferase route): step 1/1. Functionally, involved in the synthesis of meso-diaminopimelate (m-DAP or DL-DAP), required for both lysine and peptidoglycan biosynthesis. Catalyzes the direct conversion of tetrahydrodipicolinate to LL-diaminopimelate. This is LL-diaminopimelate aminotransferase from Rippkaea orientalis (strain PCC 8801 / RF-1) (Cyanothece sp. (strain PCC 8801)).